Consider the following 162-residue polypeptide: Beta-lactoglobulin (162 aa).

Cystine bridges form between Cys-66–Cys-160, Cys-106–Cys-119, and Cys-106–Cys-121.

It belongs to the calycin superfamily. Lipocalin family. Under physiological conditions beta-lactoglobulin exists as an equilibrium mixture of monomeric and dimeric forms. Alternate disulfide bonds occur in equal amounts.

It is found in the secreted. Functionally, lactoglobulin is the primary component of whey, it binds retinol and is probably involved in the transport of that molecule. In Ovis aries musimon (Mouflon), this protein is Beta-lactoglobulin (LGB).